The primary structure comprises 276 residues: Large ribosomal subunit protein uL2 (276 aa).

The disordered stretch occupies residues 212 to 276 (NRHRGIRPQT…KLIISRKKHK (65 aa)). Residues 257–276 (YKTRKKKASDKLIISRKKHK) show a composition bias toward basic residues.

It belongs to the universal ribosomal protein uL2 family. Part of the 50S ribosomal subunit. Forms a bridge to the 30S subunit in the 70S ribosome.

Its function is as follows. One of the primary rRNA binding proteins. Required for association of the 30S and 50S subunits to form the 70S ribosome, for tRNA binding and peptide bond formation. It has been suggested to have peptidyltransferase activity; this is somewhat controversial. Makes several contacts with the 16S rRNA in the 70S ribosome. The polypeptide is Large ribosomal subunit protein uL2 (Helicobacter pylori (strain P12)).